The sequence spans 163 residues: Putative phosphinothricin acetyltransferase YwnH (163 aa).

Residues Met1–Leu158 enclose the N-acetyltransferase domain. Acetyl-CoA-binding positions include Ile85 to Ile87, Lys94 to Ser98, and Asn124 to Pro126.

This sequence belongs to the acetyltransferase family. PAT/BAR subfamily.

It carries out the reaction phosphinothricin + acetyl-CoA = N-acetylphosphinothricin + CoA + H(+). Functionally, this enzyme is an effector of phosphinothricin tripeptide (PTT or bialaphos) resistance. Inactivates PTT by transfer of an acetyl group. This is Putative phosphinothricin acetyltransferase YwnH (ywnH) from Bacillus subtilis (strain 168).